We begin with the raw amino-acid sequence, 183 residues long: Translation initiation factor IF-3 (183 aa).

This sequence belongs to the IF-3 family. Monomer.

It localises to the cytoplasm. IF-3 binds to the 30S ribosomal subunit and shifts the equilibrium between 70S ribosomes and their 50S and 30S subunits in favor of the free subunits, thus enhancing the availability of 30S subunits on which protein synthesis initiation begins. In Pseudomonas syringae pv. tomato (strain ATCC BAA-871 / DC3000), this protein is Translation initiation factor IF-3.